Consider the following 580-residue polypeptide: Conglutin beta 3 (580 aa).

The signal sequence occupies residues 1–30 (MAKMRVRFPTLVLLLGIVFLMAVSIGIAYG). Basic and acidic residues-rich tracts occupy residues 37–72 (NHER…RESE) and 79–92 (REQR…REQE). Positions 37 to 165 (NHERPQEREQ…DSRRQRNPYY (129 aa)) are disordered. Over residues 124–133 (QGSSSSSRRQ) the composition is skewed to low complexity. The span at 134 to 145 (SGYERREQREER) shows a compositional bias: basic and acidic residues. 2 consecutive Cupin type-1 domains span residues 164–322 (YYFS…EEIQ) and 381–538 (FNLR…EDVE). N-linked (GlcNAc...) asparagine glycosylation is found at Asn-229 and Asn-488. The segment at 549 to 569 (FANAQPQQQQQREREGRHGRR) is disordered.

Belongs to the 7S seed storage protein family. As to quaternary structure, component of globulins complexes which accumulate in seeds.

Its function is as follows. Seed storage protein. Accumulates during seed development and is hydrolyzed after germination to provide a carbon and nitrogen source for the developing seedling. The polypeptide is Conglutin beta 3 (Lupinus angustifolius (Narrow-leaved blue lupine)).